The chain runs to 82 residues: Small ribosomal subunit protein bS16 (82 aa).

Belongs to the bacterial ribosomal protein bS16 family.

The chain is Small ribosomal subunit protein bS16 from Alcanivorax borkumensis (strain ATCC 700651 / DSM 11573 / NCIMB 13689 / SK2).